Reading from the N-terminus, the 84-residue chain is Magnetosome protein MamR (84 aa).

It belongs to the magnetosome MamR family.

The protein localises to the magnetosome. In terms of biological role, may play a role in controlling magnetite number and size. Coexpression of mamLQRBIEMO in a deletion of the 17 gene mamAB operon restores magnetosome vesicle formation but not magnetite biosynthesis. The protein is Magnetosome protein MamR of Magnetospirillum gryphiswaldense (strain DSM 6361 / JCM 21280 / NBRC 15271 / MSR-1).